Reading from the N-terminus, the 391-residue chain is Succinate--CoA ligase [ADP-forming] subunit beta (391 aa).

Residues 9-247 form the ATP-grasp domain; the sequence is KDILAKYGVA…IAEEDPLEVE (239 aa). ATP contacts are provided by residues Lys-49, 56 to 58, Glu-102, Ala-105, and Glu-110; that span reads GRG. Residues Asn-202 and Asp-216 each contribute to the Mg(2+) site. Substrate contacts are provided by residues Asn-267 and 324–326; that span reads GIL.

This sequence belongs to the succinate/malate CoA ligase beta subunit family. In terms of assembly, heterotetramer of two alpha and two beta subunits. Mg(2+) serves as cofactor.

It carries out the reaction succinate + ATP + CoA = succinyl-CoA + ADP + phosphate. The catalysed reaction is GTP + succinate + CoA = succinyl-CoA + GDP + phosphate. It functions in the pathway carbohydrate metabolism; tricarboxylic acid cycle; succinate from succinyl-CoA (ligase route): step 1/1. Succinyl-CoA synthetase functions in the citric acid cycle (TCA), coupling the hydrolysis of succinyl-CoA to the synthesis of either ATP or GTP and thus represents the only step of substrate-level phosphorylation in the TCA. The beta subunit provides nucleotide specificity of the enzyme and binds the substrate succinate, while the binding sites for coenzyme A and phosphate are found in the alpha subunit. In Acidobacterium capsulatum (strain ATCC 51196 / DSM 11244 / BCRC 80197 / JCM 7670 / NBRC 15755 / NCIMB 13165 / 161), this protein is Succinate--CoA ligase [ADP-forming] subunit beta.